We begin with the raw amino-acid sequence, 194 residues long: Large ribosomal subunit protein bL25 (194 aa).

It belongs to the bacterial ribosomal protein bL25 family. CTC subfamily. Part of the 50S ribosomal subunit; part of the 5S rRNA/L5/L18/L25 subcomplex. Contacts the 5S rRNA. Binds to the 5S rRNA independently of L5 and L18.

In terms of biological role, this is one of the proteins that binds to the 5S RNA in the ribosome where it forms part of the central protuberance. In Thermobifida fusca (strain YX), this protein is Large ribosomal subunit protein bL25.